Reading from the N-terminus, the 338-residue chain is Ketol-acid reductoisomerase (NADP(+)) (338 aa).

In terms of domain architecture, KARI N-terminal Rossmann spans 1 to 181 (MKVFYDKDCD…GGGRAGIIET (181 aa)). NADP(+)-binding positions include 24 to 27 (YGSQ), Arg-47, and Ser-52. The active site involves His-107. Residue Gly-133 coordinates NADP(+). Positions 182 to 327 (NFREETETDL…GKLRAMMPWI (146 aa)) constitute a KARI C-terminal knotted domain. Positions 190, 194, 226, and 230 each coordinate Mg(2+). Ser-251 contacts substrate.

This sequence belongs to the ketol-acid reductoisomerase family. It depends on Mg(2+) as a cofactor.

It catalyses the reaction (2R)-2,3-dihydroxy-3-methylbutanoate + NADP(+) = (2S)-2-acetolactate + NADPH + H(+). The enzyme catalyses (2R,3R)-2,3-dihydroxy-3-methylpentanoate + NADP(+) = (S)-2-ethyl-2-hydroxy-3-oxobutanoate + NADPH + H(+). It functions in the pathway amino-acid biosynthesis; L-isoleucine biosynthesis; L-isoleucine from 2-oxobutanoate: step 2/4. The protein operates within amino-acid biosynthesis; L-valine biosynthesis; L-valine from pyruvate: step 2/4. Functionally, involved in the biosynthesis of branched-chain amino acids (BCAA). Catalyzes an alkyl-migration followed by a ketol-acid reduction of (S)-2-acetolactate (S2AL) to yield (R)-2,3-dihydroxy-isovalerate. In the isomerase reaction, S2AL is rearranged via a Mg-dependent methyl migration to produce 3-hydroxy-3-methyl-2-ketobutyrate (HMKB). In the reductase reaction, this 2-ketoacid undergoes a metal-dependent reduction by NADPH to yield (R)-2,3-dihydroxy-isovalerate. In Bordetella bronchiseptica (strain ATCC BAA-588 / NCTC 13252 / RB50) (Alcaligenes bronchisepticus), this protein is Ketol-acid reductoisomerase (NADP(+)).